Here is a 215-residue protein sequence, read N- to C-terminus: Octanoyltransferase (215 aa).

The region spanning 31-206 (PDSQDEIWLV…QLVKHLDYAE (176 aa)) is the BPL/LPL catalytic domain. Substrate is bound by residues 70 to 77 (RGGQVTYH), 137 to 139 (SLG), and 150 to 152 (GLA). Cys168 acts as the Acyl-thioester intermediate in catalysis.

Belongs to the LipB family.

It is found in the cytoplasm. It carries out the reaction octanoyl-[ACP] + L-lysyl-[protein] = N(6)-octanoyl-L-lysyl-[protein] + holo-[ACP] + H(+). Its pathway is protein modification; protein lipoylation via endogenous pathway; protein N(6)-(lipoyl)lysine from octanoyl-[acyl-carrier-protein]: step 1/2. In terms of biological role, catalyzes the transfer of endogenously produced octanoic acid from octanoyl-acyl-carrier-protein onto the lipoyl domains of lipoate-dependent enzymes. Lipoyl-ACP can also act as a substrate although octanoyl-ACP is likely to be the physiological substrate. This chain is Octanoyltransferase, found in Pseudomonas putida (strain W619).